Here is a 371-residue protein sequence, read N- to C-terminus: RNA-binding protein 48 (371 aa).

Residues 46–124 form the RRM domain; that stretch reads QYLLIQGVPA…GLLHVCYAPE (79 aa). 2 disordered regions span residues 157-191 and 348-371; these read KPVP…PESP and VPKP…RRRI. Residues 158–170 show a composition bias toward basic and acidic residues; it reads PVPEQKGTKDSRQ.

This sequence belongs to the RBM48 family. In terms of assembly, component of the minor spliceosome. Within this complex, interacts with ARMC7 and PRPF8/PRP8.

Its function is as follows. As a component of the minor spliceosome, involved in the splicing of U12-type introns in pre-mRNAs. In Mus musculus (Mouse), this protein is RNA-binding protein 48 (Rbm48).